The primary structure comprises 287 residues: AA14 family lytic polysaccharide monooxygenase A (287 aa).

A signal peptide spans 1–18 (MLRILTLSILATSKLASA). N-linked (GlcNAc...) asparagine glycosylation is found at N33, N83, and N137. 3 disulfide bridges follow: C188/C193, C195/C216, and C236/C243. N238 is a glycosylation site (N-linked (GlcNAc...) asparagine).

It belongs to the polysaccharide monooxygenase AA14 family. The cofactor is Cu(2+).

It localises to the secreted. Functionally, lytic polysaccharide monooxygenase (LPMO) that has a broad substrate specificity with strong oxidative activity on pure amorphous cellulose and xyloglucan and plays as a bifunctional enzyme to decompose some specific network structures formed between cellulose and hemicellulose in the plant cell walls. Catalysis by LPMOs requires the reduction of the active-site copper from Cu(II) to Cu(I) by a reducing agent and H(2)O(2) or O(2) as a cosubstrate. Simultaneously oxidizes cellulose, xylan and xyloglucan in natural hemi/cellulosic substrate such as fibrillated eucalyptus pulp, and releases native and oxidized cello-oligosaccharides, xylo-oligosaccharides and xyloglucan oligosaccharides from this substrate. The cellulolytic/hemicellulolytic activity becomes weaker as the contents of xylan increase in the alkaline-extracted hemi/cellulosic substrates. This chain is AA14 family lytic polysaccharide monooxygenase A, found in Talaromyces rugulosus (Penicillium rugulosum).